We begin with the raw amino-acid sequence, 271 residues long: Ribosomal RNA small subunit methyltransferase A (271 aa).

S-adenosyl-L-methionine-binding residues include H18, L20, G45, E66, D91, and N113.

The protein belongs to the class I-like SAM-binding methyltransferase superfamily. rRNA adenine N(6)-methyltransferase family. RsmA subfamily.

It localises to the cytoplasm. The enzyme catalyses adenosine(1518)/adenosine(1519) in 16S rRNA + 4 S-adenosyl-L-methionine = N(6)-dimethyladenosine(1518)/N(6)-dimethyladenosine(1519) in 16S rRNA + 4 S-adenosyl-L-homocysteine + 4 H(+). Its function is as follows. Specifically dimethylates two adjacent adenosines (A1518 and A1519) in the loop of a conserved hairpin near the 3'-end of 16S rRNA in the 30S particle. May play a critical role in biogenesis of 30S subunits. The chain is Ribosomal RNA small subunit methyltransferase A from Baumannia cicadellinicola subsp. Homalodisca coagulata.